Reading from the N-terminus, the 139-residue chain is Bilirubin-inducible fluorescent protein UnaG (139 aa).

Residues N57, T61, S80, R112, and 132-134 (RSY) contribute to the (4Z,15Z)-bilirubin IXalpha site.

The protein belongs to the calycin superfamily. Fatty-acid binding protein (FABP) family. As to quaternary structure, monomer. Detected in small-diameter muscle fibers from the white muscle layer from juvenile animals (glass eels) (at protein level). Detected in small-diameter muscle fibers from juvenile animals (glass eels).

It localises to the cytoplasm. Beta-barrel protein that binds unconjugated bilirubin with high affinity. Excitation of the bilirubin-bound protein gives rise to green fluorescence, both under normoxia and hypoxia. The apoprotein is not fluorescent. Does not emit fluorescence in the presence of ditauro-bilirubin, urobilin or biliverdin. This Anguilla japonica (Japanese eel) protein is Bilirubin-inducible fluorescent protein UnaG.